We begin with the raw amino-acid sequence, 461 residues long: Ufm1-specific protease 2 (461 aa).

Catalysis depends on residues C294, D418, and H420.

Belongs to the peptidase C78 family. In terms of tissue distribution, expressed at high level in brain, kidney, stomach, skeletal muscle, liver, pancreas, spleen and testis.

It is found in the endoplasmic reticulum. The protein resides in the cytoplasm. It localises to the nucleus. Functionally, thiol-dependent isopeptidase that specifically cleaves UFM1, a ubiquitin-like modifier protein, from conjugated proteins, such as CD274/PD-L1, CYB5R3, DDRGK1, MRE11, RPL26/uL24, TRIP4 and RPL26/uL24. While it is also able to mediate the processing of UFM1 precursors, a prerequisite for conjugation reactions, UFSP2 mainly acts as a protein deUFMylase that mediates deconjugation of UFM1 from target proteins. Mediates deUFMylation of RPL26/uL24, a critical step to release the UFM1 ribosome E3 ligase (UREL) complex during the recycling of 60S ribosome subunits from the endoplasmic reticulum. Catalyzes deUFMylation of TRIP4, regulating intracellular nuclear receptors transactivation and thereby regulate cell proliferation and differentiation. The protein is Ufm1-specific protease 2 of Mus musculus (Mouse).